Reading from the N-terminus, the 452-residue chain is UPF0210 protein Cthe_0410 (452 aa).

It belongs to the UPF0210 family. Homodimer.

This chain is UPF0210 protein Cthe_0410, found in Acetivibrio thermocellus (strain ATCC 27405 / DSM 1237 / JCM 9322 / NBRC 103400 / NCIMB 10682 / NRRL B-4536 / VPI 7372) (Clostridium thermocellum).